Consider the following 74-residue polypeptide: UPF0346 protein YozE (74 aa).

Belongs to the UPF0346 family.

In Bacillus subtilis (strain 168), this protein is UPF0346 protein YozE (yozE).